The sequence spans 241 residues: Purine nucleoside phosphorylase DeoD-type 1 (241 aa).

H5 provides a ligand contact to a purine D-ribonucleoside. Phosphate-binding positions include G21, R25, R44, and 88 to 91; that span reads RVGS. A purine D-ribonucleoside is bound by residues 180 to 182 and 204 to 205; these read EME and SD. Catalysis depends on D205, which acts as the Proton donor.

It belongs to the PNP/UDP phosphorylase family. In terms of assembly, homohexamer; trimer of homodimers.

The catalysed reaction is a purine D-ribonucleoside + phosphate = a purine nucleobase + alpha-D-ribose 1-phosphate. It carries out the reaction a purine 2'-deoxy-D-ribonucleoside + phosphate = a purine nucleobase + 2-deoxy-alpha-D-ribose 1-phosphate. Catalyzes the reversible phosphorolytic breakdown of the N-glycosidic bond in the beta-(deoxy)ribonucleoside molecules, with the formation of the corresponding free purine bases and pentose-1-phosphate. The protein is Purine nucleoside phosphorylase DeoD-type 1 of Vibrio cholerae serotype O1 (strain ATCC 39315 / El Tor Inaba N16961).